Reading from the N-terminus, the 336-residue chain is Glyceraldehyde-3-phosphate dehydrogenase, chromosomal (336 aa).

NAD(+) contacts are provided by residues 12–13 (RI), D37, R81, and S123. D-glyceraldehyde 3-phosphate is bound by residues 154-156 (SCT) and T185. C155 functions as the Nucleophile in the catalytic mechanism. An NAD(+)-binding site is contributed by N186. D-glyceraldehyde 3-phosphate is bound by residues R200, 213-214 (TG), and R236. N317 serves as a coordination point for NAD(+).

It belongs to the glyceraldehyde-3-phosphate dehydrogenase family. As to quaternary structure, homotetramer.

It catalyses the reaction D-glyceraldehyde 3-phosphate + phosphate + NAD(+) = (2R)-3-phospho-glyceroyl phosphate + NADH + H(+). It functions in the pathway carbohydrate biosynthesis; Calvin cycle. Functionally, could be involved in carbon fixation as a component of the Calvin cycle. Catalyzes the oxidative phosphorylation of glyceraldehyde 3-phosphate (G3P) to 1,3-bisphosphoglycerate (BPG) using the cofactor NAD. The first reaction step involves the formation of a hemiacetal intermediate between G3P and a cysteine residue, and this hemiacetal intermediate is then oxidized to a thioester, with concomitant reduction of NAD to NADH. The reduced NADH is then exchanged with the second NAD, and the thioester is attacked by a nucleophilic inorganic phosphate to produce BPG. In Cupriavidus necator (strain ATCC 17699 / DSM 428 / KCTC 22496 / NCIMB 10442 / H16 / Stanier 337) (Ralstonia eutropha), this protein is Glyceraldehyde-3-phosphate dehydrogenase, chromosomal (cbbGC).